The chain runs to 301 residues: Probable 5-dehydro-4-deoxyglucarate dehydratase (301 aa).

It belongs to the DapA family.

It carries out the reaction 5-dehydro-4-deoxy-D-glucarate + H(+) = 2,5-dioxopentanoate + CO2 + H2O. Its pathway is carbohydrate acid metabolism; D-glucarate degradation; 2,5-dioxopentanoate from D-glucarate: step 2/2. The protein is Probable 5-dehydro-4-deoxyglucarate dehydratase of Xanthobacter autotrophicus (strain ATCC BAA-1158 / Py2).